The sequence spans 213 residues: Peptidyl-tRNA hydrolase (213 aa).

A tRNA-binding site is contributed by Tyr-26. His-31 functions as the Proton acceptor in the catalytic mechanism. TRNA is bound by residues Tyr-78, Asn-80, and Asn-126.

The protein belongs to the PTH family. As to quaternary structure, monomer.

Its subcellular location is the cytoplasm. It catalyses the reaction an N-acyl-L-alpha-aminoacyl-tRNA + H2O = an N-acyl-L-amino acid + a tRNA + H(+). Its function is as follows. Hydrolyzes ribosome-free peptidyl-tRNAs (with 1 or more amino acids incorporated), which drop off the ribosome during protein synthesis, or as a result of ribosome stalling. Functionally, catalyzes the release of premature peptidyl moieties from peptidyl-tRNA molecules trapped in stalled 50S ribosomal subunits, and thus maintains levels of free tRNAs and 50S ribosomes. The polypeptide is Peptidyl-tRNA hydrolase (Nostoc punctiforme (strain ATCC 29133 / PCC 73102)).